A 665-amino-acid chain; its full sequence is Putative phospholipid:diacylglycerol acyltransferase 2 (665 aa).

The chain crosses the membrane as a helical span at residues 48–68; sequence LIGYLCTAWWLLLFLYHSVPV. The active-site Acyl-ester intermediate is the serine 237. Active-site charge relay system residues include aspartate 567 and histidine 620.

It belongs to the AB hydrolase superfamily. Lipase family.

The protein resides in the membrane. It catalyses the reaction a glycerophospholipid + a 1,2-diacyl-sn-glycerol = a monoacylglycerophospholipid + a triacyl-sn-glycerol. The protein is Putative phospholipid:diacylglycerol acyltransferase 2 (PDAT2) of Arabidopsis thaliana (Mouse-ear cress).